Here is a 141-residue protein sequence, read N- to C-terminus: HTH-type transcriptional regulator ZntR (141 aa).

Residues 1-70 form the HTH merR-type domain; it reads MYRIGELAKM…LESIRELLSI (70 aa). The segment at residues 4–23 is a DNA-binding region (H-T-H motif); sequence IGELAKMAEVTPDTIRYYEK. 4 residues coordinate Zn(2+): cysteine 114, cysteine 115, histidine 119, and cysteine 124.

Homodimer.

In terms of biological role, zinc-responsive transcriptional regulator of zntA. This Escherichia coli O157:H7 protein is HTH-type transcriptional regulator ZntR (zntR).